We begin with the raw amino-acid sequence, 108 residues long: Hrp pili protein HrpA (108 aa).

Residues N41–S56 are compositionally biased toward polar residues. Residues N41–E72 form a disordered region.

The protein belongs to the HrpA type 1 family.

It localises to the secreted. The protein localises to the fimbrium. Its function is as follows. Major structural protein of the hrp pilus, which is a component of the type III secretion system (T3SS, Hrp secretion system) required for effector protein delivery, parasitism, and pathogenicity. The hrp pilus functions as a conduit for protein delivery into the host cell. Also, affects the expression of T3SS-associated genes. Required for full expression of genes that encode regulatory, secretion, and effector proteins of the T3SS. HrpA-mediated gene regulation apparently is through effect on the mRNA level of hrpR and hrpS. This Pseudomonas savastanoi pv. phaseolicola (Pseudomonas syringae pv. phaseolicola) protein is Hrp pili protein HrpA (hrpA).